A 428-amino-acid chain; its full sequence is Enolase (428 aa).

Residue Q165 participates in (2R)-2-phosphoglycerate binding. E207 acts as the Proton donor in catalysis. Mg(2+) contacts are provided by D244, E283, and D310. K335, R364, S365, and K386 together coordinate (2R)-2-phosphoglycerate. Catalysis depends on K335, which acts as the Proton acceptor.

The protein belongs to the enolase family. The cofactor is Mg(2+).

The protein localises to the cytoplasm. It is found in the secreted. The protein resides in the cell surface. It carries out the reaction (2R)-2-phosphoglycerate = phosphoenolpyruvate + H2O. It participates in carbohydrate degradation; glycolysis; pyruvate from D-glyceraldehyde 3-phosphate: step 4/5. Catalyzes the reversible conversion of 2-phosphoglycerate (2-PG) into phosphoenolpyruvate (PEP). It is essential for the degradation of carbohydrates via glycolysis. The sequence is that of Enolase from Chlamydia pneumoniae (Chlamydophila pneumoniae).